The chain runs to 216 residues: Probable GTP-binding protein EngB (216 aa).

In terms of domain architecture, EngB-type G spans 24–205; it reads ATPEIAFVGR…WARLAALAAE (182 aa). Residues 32 to 39, 59 to 63, 86 to 89, 153 to 156, and 184 to 186 contribute to the GTP site; these read GRSNVGKS, GRTRA, DLPG, TKTD, and FSA. Mg(2+) contacts are provided by S39 and T61.

Belongs to the TRAFAC class TrmE-Era-EngA-EngB-Septin-like GTPase superfamily. EngB GTPase family. The cofactor is Mg(2+).

In terms of biological role, necessary for normal cell division and for the maintenance of normal septation. This Anaeromyxobacter dehalogenans (strain 2CP-1 / ATCC BAA-258) protein is Probable GTP-binding protein EngB.